The following is a 1059-amino-acid chain: Disks large-associated protein 2 (1059 aa).

Disordered stretches follow at residues 31-56 (GEPE…EEDI) and 244-311 (TKSH…SDST). Over residues 244–261 (TKSHSLEGSSKSNINGTK) the composition is skewed to polar residues. Over residues 262–271 (SEGRMDDHHQ) the composition is skewed to basic and acidic residues. The segment covering 272–285 (SHLSKHSKRSKSKE) has biased composition (basic residues). Ser-302, Ser-308, Ser-390, and Ser-456 each carry phosphoserine. Disordered stretches follow at residues 446 to 466 (GDEE…VALR) and 632 to 669 (VTAQ…NSMD). Over residues 632–645 (VTAQSSTESTQDAY) the composition is skewed to polar residues. Ser-667, Ser-670, Ser-673, and Ser-720 each carry phosphoserine. Residues 723–756 (VQDSEFPDHQPYPRSDVETATDSDTESRGLREYH) are disordered. Thr-743 is modified (phosphothreonine). Ser-745 carries the phosphoserine modification. The segment covering 747-756 (TESRGLREYH) has biased composition (basic and acidic residues). 4 positions are modified to phosphoserine: Ser-776, Ser-811, Ser-983, and Ser-1012. The interval 985-1024 (ERKEERKIPPPIPKKPPKGKFPITREKSLDLPDRQRQEAR) is disordered. Basic and acidic residues predominate over residues 1007–1024 (ITREKSLDLPDRQRQEAR).

The protein belongs to the SAPAP family. In terms of assembly, interacts with DLG4/PSD-95. In terms of tissue distribution, expressed in various brain areas.

The protein localises to the cell membrane. It is found in the postsynaptic density. It localises to the synapse. May play a role in the molecular organization of synapses and neuronal cell signaling. Could be an adapter protein linking ion channel to the subsynaptic cytoskeleton. May induce enrichment of PSD-95/SAP90 at the plasma membrane. The sequence is that of Disks large-associated protein 2 from Rattus norvegicus (Rat).